Here is a 198-residue protein sequence, read N- to C-terminus: Pyridoxal 5'-phosphate synthase subunit PdxT (198 aa).

49–51 (GES) lines the L-glutamine pocket. C81 functions as the Nucleophile in the catalytic mechanism. Residues R113 and 141–142 (IR) contribute to the L-glutamine site. Catalysis depends on charge relay system residues H177 and E179.

This sequence belongs to the glutaminase PdxT/SNO family. In terms of assembly, in the presence of PdxS, forms a dodecamer of heterodimers. Only shows activity in the heterodimer.

It catalyses the reaction aldehydo-D-ribose 5-phosphate + D-glyceraldehyde 3-phosphate + L-glutamine = pyridoxal 5'-phosphate + L-glutamate + phosphate + 3 H2O + H(+). The catalysed reaction is L-glutamine + H2O = L-glutamate + NH4(+). The protein operates within cofactor biosynthesis; pyridoxal 5'-phosphate biosynthesis. Its function is as follows. Catalyzes the hydrolysis of glutamine to glutamate and ammonia as part of the biosynthesis of pyridoxal 5'-phosphate. The resulting ammonia molecule is channeled to the active site of PdxS. The protein is Pyridoxal 5'-phosphate synthase subunit PdxT of Mycobacterium avium (strain 104).